Consider the following 339-residue polypeptide: Serine/arginine-rich splicing factor 6 (339 aa).

Residues 2 to 72 (PRVYIGRLSY…ERVIVEHARG (71 aa)) enclose the RRM 1 domain. Phosphoserine is present on residues serine 45, serine 81, and serine 84. Residues 75-103 (RDRDGYSYGSRSGGGGYSSRRTSGRDKYG) are disordered. In terms of domain architecture, RRM 2 spans 110–183 (YRLIVENLSS…RNIRLIEDKP (74 aa)). Position 165 is an N6-acetyllysine (lysine 165). The interval 176 to 339 (IRLIEDKPRT…RSRSRSSSRD (164 aa)) is disordered. A Glycyl lysine isopeptide (Lys-Gly) (interchain with G-Cter in SUMO2) cross-link involves residue lysine 182. A compositionally biased stretch (basic residues) spans 185–250 (TSHRRSYSGS…RKSRSKSKSK (66 aa)). Basic and acidic residues predominate over residues 280–291 (SPKENGKGDIKS). 2 positions are modified to phosphoserine: serine 297 and serine 299. Serine 303 bears the Phosphoserine; by DYRK1A mark. A phosphoserine mark is found at serine 314 and serine 316. Basic residues predominate over residues 321–339 (RASRSRSRSRSRSRSSSRD).

The protein belongs to the splicing factor SR family. In terms of assembly, binds SREK1/SFRS12. Interacts with DYRK1A. Interacts with RBMY; the interaction inhibits SRSF6 pre-mRNA splicing. Extensively phosphorylated on serine residues in the RS domain. Phosphorylated by DYRK1A, probably in the RS domain. Phosphorylation by DYRK1A modulates alternative splice site selection and inhibits the expression of MAPT/Tau exon 10.

It is found in the nucleus. The protein resides in the nucleus speckle. Plays a role in constitutive splicing and modulates the selection of alternative splice sites. Plays a role in the alternative splicing of MAPT/Tau exon 10. Binds to alternative exons of TNC pre-mRNA and promotes the expression of alternatively spliced TNC. Plays a role in wound healing and in the regulation of keratinocyte differentiation and proliferation via its role in alternative splicing. The sequence is that of Serine/arginine-rich splicing factor 6 (Srsf6) from Mus musculus (Mouse).